The primary structure comprises 193 residues: dCTP deaminase, dUMP-forming (193 aa).

Residues 101 to 106 (KSSLGR), aspartate 119, 127 to 129 (TLE), glutamine 148, tyrosine 162, and glutamine 174 contribute to the dCTP site. Glutamate 129 functions as the Proton donor/acceptor in the catalytic mechanism. Residues 161-184 (PYGSETTGSHYQGQRGPTPSRSYQ) form a disordered region.

It belongs to the dCTP deaminase family. Homotrimer.

It catalyses the reaction dCTP + 2 H2O = dUMP + NH4(+) + diphosphate. It participates in pyrimidine metabolism; dUMP biosynthesis; dUMP from dCTP: step 1/1. In terms of biological role, bifunctional enzyme that catalyzes both the deamination of dCTP to dUTP and the hydrolysis of dUTP to dUMP without releasing the toxic dUTP intermediate. The sequence is that of dCTP deaminase, dUMP-forming from Bifidobacterium animalis subsp. lactis (strain AD011).